The sequence spans 319 residues: Pantothenate kinase (319 aa).

96-103 (GSVAVGKS) lines the ATP pocket.

It belongs to the prokaryotic pantothenate kinase family.

The protein resides in the cytoplasm. The catalysed reaction is (R)-pantothenate + ATP = (R)-4'-phosphopantothenate + ADP + H(+). It functions in the pathway cofactor biosynthesis; coenzyme A biosynthesis; CoA from (R)-pantothenate: step 1/5. The chain is Pantothenate kinase from Bacillus velezensis (strain DSM 23117 / BGSC 10A6 / LMG 26770 / FZB42) (Bacillus amyloliquefaciens subsp. plantarum).